We begin with the raw amino-acid sequence, 306 residues long: N-acetylmuramic acid/N-acetylglucosamine kinase (306 aa).

Ser-12 lines the ATP pocket. Asn-35 serves as a coordination point for substrate. Thr-124 is an ATP binding site. Substrate contacts are provided by residues 142 to 144 (GWG) and Asp-149. Position 208 (Ala-208) interacts with ATP.

This sequence belongs to the eukaryotic-type N-acetylglucosamine kinase family. Requires Mg(2+) as cofactor.

The protein localises to the cytoplasm. It catalyses the reaction N-acetyl-D-glucosamine + ATP = N-acetyl-D-glucosamine 6-phosphate + ADP + H(+). It carries out the reaction N-acetyl-D-muramate + ATP = N-acetyl-D-muramate 6-phosphate + ADP + H(+). Its pathway is cell wall biogenesis; peptidoglycan recycling. Its function is as follows. Catalyzes the ATP-dependent phosphorylation of both cell wall (peptidoglycan) amino sugars, N-acetylmuramic acid (MurNAc) and N-acetylglucosamine (GlcNAc), at the 6-hydroxyl group. Neither the non-N-acetylated forms of the cell wall sugars, i.e., glucosamine and/or muramic acid, nor epimeric hexoses or 1,6-anhydro-MurNAc are substrates for the enzyme. May have a role in the rescue of the murein sugars GlcNAc and MurNAc released from muropeptides during cell wall turnover in C.acetobutylicum. This chain is N-acetylmuramic acid/N-acetylglucosamine kinase, found in Clostridium acetobutylicum (strain ATCC 824 / DSM 792 / JCM 1419 / IAM 19013 / LMG 5710 / NBRC 13948 / NRRL B-527 / VKM B-1787 / 2291 / W).